Consider the following 181-residue polypeptide: uncharacterized protein (181 aa).

Gly residues-rich tracts occupy residues 143–156 (RRGG…GPRG) and 170–181 (GPFGPGYRGPRF). Residues 143–181 (RRGGRYGDFGGPRGPRGPRNDGPFGPFGPFGPGYRGPRF) form a disordered region.

Has been detected in a cytochrome bc1-aa3 supercomplex; its deletion however leaves complex activity unaffected.

This is an uncharacterized protein from Corynebacterium glutamicum (strain ATCC 13032 / DSM 20300 / JCM 1318 / BCRC 11384 / CCUG 27702 / LMG 3730 / NBRC 12168 / NCIMB 10025 / NRRL B-2784 / 534).